Here is a 477-residue protein sequence, read N- to C-terminus: Inner membrane transporter YgjI (477 aa).

At Met1 to Thr8 the chain is on the periplasmic side. Residues Ile9–Ile29 form a helical membrane-spanning segment. Over Asn30–Pro41 the chain is Cytoplasmic. A helical transmembrane segment spans residues Met42 to Val62. Residues Ser63–Arg83 lie on the Periplasmic side of the membrane. Residues Trp84–Leu104 form a helical membrane-spanning segment. Residues Pro105–Tyr120 are Cytoplasmic-facing. Residues Ile121–Val141 form a helical membrane-spanning segment. Residues Ser142 to Thr158 lie on the Periplasmic side of the membrane. Residues Leu159–Val179 traverse the membrane as a helical segment. Residues Gln180 to Trp196 are Cytoplasmic-facing. Residues Ala197–Val217 traverse the membrane as a helical segment. The Periplasmic portion of the chain corresponds to Tyr218–Val232. A helical transmembrane segment spans residues Ile233–Val253. The Cytoplasmic portion of the chain corresponds to Phe254–Thr263. The helical transmembrane segment at Gly264–Met284 threads the bilayer. Topologically, residues Asn285–Arg286 are periplasmic. The helical transmembrane segment at Phe287 to Pro307 threads the bilayer. Over Val308–Arg335 the chain is Cytoplasmic. The chain crosses the membrane as a helical span at residues Ala336–Asn356. At Thr357–Thr364 the chain is on the periplasmic side. The helical transmembrane segment at Ile365–Leu385 threads the bilayer. At Asn386–Thr405 the chain is on the cytoplasmic side. Residues Gly406–Phe426 traverse the membrane as a helical segment. Topologically, residues Pro427 to Asn431 are periplasmic. Residues Ile432–Trp452 form a helical membrane-spanning segment. The Cytoplasmic segment spans residues Lys453–Asp477.

Belongs to the amino acid-polyamine-organocation (APC) superfamily.

It localises to the cell inner membrane. The polypeptide is Inner membrane transporter YgjI (ygjI) (Escherichia coli (strain K12)).